The following is a 247-amino-acid chain: E3 ubiquitin-protein ligase RNF182 (247 aa).

The RING-type zinc finger occupies 20 to 68 (CKICYNRYNLKQRKPKVLECCHRVCAKCLYKIIDFGDSPQGVIVCPFCR). 2 helical membrane-spanning segments follow: residues 184–204 (VLVW…IYLL) and 211–231 (LGVV…VYGF).

In terms of assembly, interacts with ATP6V0C.

It is found in the membrane. It localises to the cytoplasm. It carries out the reaction S-ubiquitinyl-[E2 ubiquitin-conjugating enzyme]-L-cysteine + [acceptor protein]-L-lysine = [E2 ubiquitin-conjugating enzyme]-L-cysteine + N(6)-ubiquitinyl-[acceptor protein]-L-lysine.. It participates in protein modification; protein ubiquitination. Its function is as follows. E3 ubiquitin-protein ligase that mediates the ubiquitination of ATP6V0C and targets it to degradation via the ubiquitin-proteasome pathway. Also plays a role in the inhibition of TLR-triggered innate immune response by mediating 'Lys'-48-linked ubiquitination and subsequent degradation of NF-kappa-B component RELA. The polypeptide is E3 ubiquitin-protein ligase RNF182 (RNF182) (Ailuropoda melanoleuca (Giant panda)).